The following is a 66-amino-acid chain: Small ribosomal subunit protein bS21 (66 aa).

The protein belongs to the bacterial ribosomal protein bS21 family.

The protein is Small ribosomal subunit protein bS21 of Rickettsia peacockii (strain Rustic).